The following is a 226-amino-acid chain: Peroxiredoxin-like 2C (226 aa).

This sequence belongs to the peroxiredoxin-like PRXL2 family. PRXL2C subfamily. In terms of tissue distribution, expressed in gastric tissues.

Functionally, may positively regulate ERK1/2 signaling and AKT1 activation leading to HIF1A up-regulation with an increased expression of glycolysis genes and enhanced glycolysis. This Homo sapiens (Human) protein is Peroxiredoxin-like 2C.